A 207-amino-acid chain; its full sequence is Large ribosomal subunit protein uL4 (207 aa).

Residues 55 to 76 (ALVSGGGKKPWRQKGTGRARHG) form a disordered region. Positions 63–76 (KPWRQKGTGRARHG) are enriched in basic residues.

The protein belongs to the universal ribosomal protein uL4 family. As to quaternary structure, part of the 50S ribosomal subunit.

Its function is as follows. One of the primary rRNA binding proteins, this protein initially binds near the 5'-end of the 23S rRNA. It is important during the early stages of 50S assembly. It makes multiple contacts with different domains of the 23S rRNA in the assembled 50S subunit and ribosome. In terms of biological role, forms part of the polypeptide exit tunnel. This chain is Large ribosomal subunit protein uL4, found in Phytoplasma mali (strain AT).